Reading from the N-terminus, the 353-residue chain is Cruciform cutting endonuclease 1, mitochondrial (353 aa).

Mg(2+)-binding residues include Asp-293 and Asp-294.

Homodimer. It depends on Mg(2+) as a cofactor.

It is found in the mitochondrion. It carries out the reaction Endonucleolytic cleavage at a junction such as a reciprocal single-stranded crossover between two homologous DNA duplexes (Holliday junction).. Capable of resolving Holliday junctions. Specific for 4-way junctions. Seems to be important for the maintenance of mitochondrial DNA. Cleaves fixed junctions at the point of strand exchange. Cleaves after 5'-CT-3' sequence. This is Cruciform cutting endonuclease 1, mitochondrial (CCE1) from Saccharomyces cerevisiae (strain ATCC 204508 / S288c) (Baker's yeast).